Reading from the N-terminus, the 439-residue chain is Adenylosuccinate synthetase (439 aa).

GTP is bound by residues 25-31 and 53-55; these read GDEGKGK and GHT. The Proton acceptor role is filled by Asp26. Mg(2+) is bound by residues Asp26 and Gly53. Residues 26-29, 51-54, Thr146, Arg160, Asn237, Thr252, and Arg316 contribute to the IMP site; these read DEGK and NAGH. The Proton donor role is filled by His54. 312 to 318 contacts substrate; it reads VTTGRRR. GTP is bound by residues Arg318, 344 to 346, and 426 to 428; these read KLD and GVG.

It belongs to the adenylosuccinate synthetase family. Homodimer. Mg(2+) is required as a cofactor.

It is found in the cytoplasm. The catalysed reaction is IMP + L-aspartate + GTP = N(6)-(1,2-dicarboxyethyl)-AMP + GDP + phosphate + 2 H(+). Its pathway is purine metabolism; AMP biosynthesis via de novo pathway; AMP from IMP: step 1/2. Functionally, plays an important role in the de novo pathway and in the salvage pathway of purine nucleotide biosynthesis. Catalyzes the first committed step in the biosynthesis of AMP from IMP. The polypeptide is Adenylosuccinate synthetase (Mycosarcoma maydis (Corn smut fungus)).